The sequence spans 479 residues: Catalase A (479 aa).

A compositionally biased stretch (polar residues) spans M1–S21. The tract at residues M1–R25 is disordered. Active-site residues include H53 and N126. Y336 lines the heme pocket. The disordered stretch occupies residues Q350 to S376. Residues N361–S376 are compositionally biased toward polar residues.

Belongs to the catalase family. It depends on heme as a cofactor.

The catalysed reaction is 2 H2O2 = O2 + 2 H2O. Activated by peroxide. Functionally, the major expressed catalase protein in strain Corvallis in stationary phase. Decomposes hydrogen peroxide into water and oxygen; serves to protect cells from the toxic effects of hydrogen peroxide. The protein is Catalase A (katA) of Pseudomonas putida (Arthrobacter siderocapsulatus).